Here is a 1196-residue protein sequence, read N- to C-terminus: Truncated transposon Ty1-A Gag-Pol polyprotein (1196 aa).

Residues 101–276 (NSYEPFQYLH…AGLDISTLLP (176 aa)) enclose the Integrase catalytic domain. Positions 112 and 177 each coordinate Mg(2+). Disordered regions lie at residues 397–528 (SKAV…ETEK), 533–552 (RSPS…NIVP), and 571–628 (DLPL…DNET). The segment covering 401-410 (SPTDSTPPST) has biased composition (low complexity). The segment covering 446–456 (STPQISNIEST) has biased composition (polar residues). The segment covering 479-494 (ESSHASKSKDFRHSDS) has biased composition (basic and acidic residues). 2 stretches are compositionally biased toward polar residues: residues 495-523 (YSEN…QISD) and 542-552 (PENNSSHNIVP). A Bipartite nuclear localization signal motif is present at residues 619 to 653 (KKRSLEDNETEIKVSRDTWNTKNMRSLEPPRSKKR). The 139-residue stretch at 779-917 (NNYYITQLDI…DILGLEIKYQ (139 aa)) folds into the Reverse transcriptase Ty1/copia-type domain. 6 residues coordinate Mg(2+): Asp787, Asp868, Asp869, Asp1051, Glu1093, and Asp1126. An RNase H Ty1/copia-type domain is found at 1051–1193 (DASYGNQPYY…IKTFKLLTNK (143 aa)).

In terms of processing, initially, virus-like particles (VLPs) are composed of the structural unprocessed proteins Gag and Gag-Pol, and also contain the host initiator methionine tRNA (tRNA(i)-Met) which serves as a primer for minus-strand DNA synthesis, and a dimer of genomic Ty RNA. Processing of the polyproteins occurs within the particle and proceeds by an ordered pathway, called maturation. First, the protease (PR) is released by autocatalytic cleavage of the Gag-Pol polyprotein yielding capsid protein p45 and a Pol-p154 precursor protein. This cleavage is a prerequisite for subsequent processing of Pol-p154 at the remaining sites to release the mature structural and catalytic proteins. Maturation takes place prior to the RT reaction and is required to produce transposition-competent VLPs.

The protein localises to the cytoplasm. Its subcellular location is the nucleus. It catalyses the reaction DNA(n) + a 2'-deoxyribonucleoside 5'-triphosphate = DNA(n+1) + diphosphate. The enzyme catalyses Endonucleolytic cleavage to 5'-phosphomonoester.. In terms of biological role, reverse transcriptase/ribonuclease H (RT) is a multifunctional enzyme that catalyzes the conversion of the retro-elements RNA genome into dsDNA within the VLP. The enzyme displays a DNA polymerase activity that can copy either DNA or RNA templates, and a ribonuclease H (RNase H) activity that cleaves the RNA strand of RNA-DNA heteroduplexes during plus-strand synthesis and hydrolyzes RNA primers. The conversion leads to a linear dsDNA copy of the retrotransposon that includes long terminal repeats (LTRs) at both ends. Functionally, integrase (IN) targets the VLP to the nucleus, where a subparticle preintegration complex (PIC) containing at least integrase and the newly synthesized dsDNA copy of the retrotransposon must transit the nuclear membrane. Once in the nucleus, integrase performs the integration of the dsDNA into the host genome. The polypeptide is Truncated transposon Ty1-A Gag-Pol polyprotein (TY1B-A) (Saccharomyces cerevisiae (strain ATCC 204508 / S288c) (Baker's yeast)).